The primary structure comprises 351 residues: Glycerol-3-phosphate dehydrogenase [NAD(P)+] (351 aa).

NADPH-binding residues include serine 12, tryptophan 13, histidine 33, and lysine 114. Sn-glycerol 3-phosphate-binding residues include lysine 114, glycine 145, and serine 147. Residue alanine 149 participates in NADPH binding. Sn-glycerol 3-phosphate contacts are provided by lysine 200, aspartate 253, serine 263, arginine 264, and asparagine 265. The active-site Proton acceptor is the lysine 200. Arginine 264 lines the NADPH pocket. NADPH contacts are provided by valine 288 and glutamate 290.

It belongs to the NAD-dependent glycerol-3-phosphate dehydrogenase family.

It localises to the cytoplasm. It catalyses the reaction sn-glycerol 3-phosphate + NAD(+) = dihydroxyacetone phosphate + NADH + H(+). It carries out the reaction sn-glycerol 3-phosphate + NADP(+) = dihydroxyacetone phosphate + NADPH + H(+). The protein operates within membrane lipid metabolism; glycerophospholipid metabolism. Functionally, catalyzes the reduction of the glycolytic intermediate dihydroxyacetone phosphate (DHAP) to sn-glycerol 3-phosphate (G3P), the key precursor for phospholipid synthesis. This is Glycerol-3-phosphate dehydrogenase [NAD(P)+] from Lacticaseibacillus casei (strain BL23) (Lactobacillus casei).